Here is a 475-residue protein sequence, read N- to C-terminus: Histidine--tRNA ligase (475 aa).

Belongs to the class-II aminoacyl-tRNA synthetase family. Homodimer.

The protein localises to the cytoplasm. The enzyme catalyses tRNA(His) + L-histidine + ATP = L-histidyl-tRNA(His) + AMP + diphosphate + H(+). This Flavobacterium johnsoniae (strain ATCC 17061 / DSM 2064 / JCM 8514 / BCRC 14874 / CCUG 350202 / NBRC 14942 / NCIMB 11054 / UW101) (Cytophaga johnsonae) protein is Histidine--tRNA ligase.